A 1174-amino-acid chain; its full sequence is ATP-dependent DNA helicase SRS2 (1174 aa).

The 303-residue stretch at 14 to 316 (QLNTQQRAAA…IILVENYRSS (303 aa)) folds into the UvrD-like helicase ATP-binding domain. 38 to 43 (GTGKTK) provides a ligand contact to ATP. The tract at residues 222-243 (LLMYTFRLLTRVRVLSNIKHVL) is leucine-zipper. An ATP-binding site is contributed by R314. Positions 317-654 (QKILNTSEIL…TISTIHGAKG (338 aa)) constitute a UvrD-like helicase C-terminal domain. The tract at residues 676-704 (DDKKDESEEDEEEDQENSKKDASPKKTRV) is disordered. S833 bears the Phosphoserine mark. Disordered regions lie at residues 865–896 (SKINGNYAPKSRVKSPEKRYAPETTSFHSPTK), 909–973 (NVPS…DKVT), and 994–1024 (ELHPPEYSNKSGQSLTSSEFSGFSSACSNSD). 2 stretches are compositionally biased toward polar residues: residues 909–922 (NVPSRQEFHSSTGK) and 935–955 (TDISPRSSTRSLKGASPNKTS). The span at 956 to 973 (HMSDDLMRPSPTRKDKVT) shows a compositional bias: basic and acidic residues. Low complexity predominate over residues 1007–1023 (SLTSSEFSGFSSACSNS).

Belongs to the helicase family. UvrD subfamily.

It localises to the nucleus. The catalysed reaction is Couples ATP hydrolysis with the unwinding of duplex DNA by translocating in the 3'-5' direction.. It catalyses the reaction ATP + H2O = ADP + phosphate + H(+). Its function is as follows. ATP-dependent DNA helicase involved in DNA repair at least for UV-induced lesions. The polarity of the helicase activity was determined to be 3' to 5'. This is ATP-dependent DNA helicase SRS2 (SRS2) from Saccharomyces cerevisiae (strain ATCC 204508 / S288c) (Baker's yeast).